Consider the following 475-residue polypeptide: Trifunctional enzyme subunit beta, mitochondrial (475 aa).

Residues 1-34 constitute a mitochondrion transit peptide; that stretch reads MISLLTYTLKNLPNTSKWALRFCMRPLSSSSQLQ. The residue at position 73 (lysine 73) is an N6-acetyllysine; alternate. Lysine 73 carries the post-translational modification N6-succinyllysine; alternate. Cysteine 139 functions as the Acyl-thioester intermediate in the catalytic mechanism. The stretch at 174-221 is an intramembrane region; the sequence is IRHSRKMRKMMLDLNKAKTLAQRLSIISKFRLNFLSPELPAVSEFSTS. Lysine 189 bears the N6-acetyllysine; alternate mark. Lysine 189 is modified (N6-succinyllysine; alternate). N6-succinyllysine is present on residues lysine 191 and lysine 292. The residue at position 294 (lysine 294) is an N6-acetyllysine; alternate. The residue at position 294 (lysine 294) is an N6-succinyllysine; alternate. An N6-acetyllysine modification is found at lysine 299. N6-acetyllysine; alternate is present on lysine 333. Residue lysine 333 is modified to N6-succinyllysine; alternate. An N6-acetyllysine mark is found at lysine 349 and lysine 362. Cysteine 459 (proton donor/acceptor) is an active-site residue.

The protein belongs to the thiolase-like superfamily. Thiolase family. Heterotetramer of 2 alpha/HADHA and 2 beta/HADHB subunits; forms the mitochondrial trifunctional enzyme. Also purified as higher order heterooligomers including a 4 alpha/HADHA and 4 beta/HADHB heterooligomer which physiological significance remains unclear. The mitochondrial trifunctional enzyme interacts with MTLN. Interacts with RSAD2/viperin.

Its subcellular location is the mitochondrion. The protein localises to the mitochondrion inner membrane. The protein resides in the mitochondrion outer membrane. It localises to the endoplasmic reticulum. The catalysed reaction is an acyl-CoA + acetyl-CoA = a 3-oxoacyl-CoA + CoA. It catalyses the reaction butanoyl-CoA + acetyl-CoA = 3-oxohexanoyl-CoA + CoA. The enzyme catalyses hexanoyl-CoA + acetyl-CoA = 3-oxooctanoyl-CoA + CoA. It carries out the reaction octanoyl-CoA + acetyl-CoA = 3-oxodecanoyl-CoA + CoA. The catalysed reaction is decanoyl-CoA + acetyl-CoA = 3-oxododecanoyl-CoA + CoA. It catalyses the reaction dodecanoyl-CoA + acetyl-CoA = 3-oxotetradecanoyl-CoA + CoA. The enzyme catalyses tetradecanoyl-CoA + acetyl-CoA = 3-oxohexadecanoyl-CoA + CoA. It participates in lipid metabolism; fatty acid beta-oxidation. Functionally, mitochondrial trifunctional enzyme catalyzes the last three of the four reactions of the mitochondrial beta-oxidation pathway. The mitochondrial beta-oxidation pathway is the major energy-producing process in tissues and is performed through four consecutive reactions breaking down fatty acids into acetyl-CoA. Among the enzymes involved in this pathway, the trifunctional enzyme exhibits specificity for long-chain fatty acids. Mitochondrial trifunctional enzyme is a heterotetrameric complex composed of two proteins, the trifunctional enzyme subunit alpha/HADHA carries the 2,3-enoyl-CoA hydratase and the 3-hydroxyacyl-CoA dehydrogenase activities, while the trifunctional enzyme subunit beta/HADHB described here bears the 3-ketoacyl-CoA thiolase activity. The sequence is that of Trifunctional enzyme subunit beta, mitochondrial (HADHB) from Bos taurus (Bovine).